The primary structure comprises 432 residues: MGNNVVVLGTQWGDEGKGKIVDLLTERAKYVVRYQGGHNAGHTLVINGEKTVLHLIPSGILRENVTSIIGNGVVLSPAALMKEMKELEDRGIPVRERLLLSEACPLILDYHVALDNAREKARGAKAIGTTGRGIGPAYEDKVARRGLRVGDLFDKETFAEKLKEVMEYHNFQLVNYYKAEAVDYQKVLDDTMAVADILTSMVVDVSDLLDQARQRGDFVMFEGAQGTLLDIDHGTYPYVTSSNTTAGGVATGSGLGPRYVDYVLGILKAYSTRVGAGPFPTELFDETGEFLCKQGNEFGATTGRRRRTGWLDTVAVRRAVQLNSLSGFCLTKLDVLDGLKEVKLCVAYRMPDGREVATTPLAADDWKGVEPIYETMPGWSESTFGVKDRSGLPQAALNYIKRIEELTGVPIDIISTGPDRTETMILRDPFDA.

GTP is bound by residues 13-19 and 41-43; these read GDEGKGK and GHT. Aspartate 14 functions as the Proton acceptor in the catalytic mechanism. Mg(2+) contacts are provided by aspartate 14 and glycine 41. IMP-binding positions include 14-17, 39-42, threonine 130, arginine 144, glutamine 225, threonine 240, and arginine 304; these read DEGK and NAGH. Histidine 42 serves as the catalytic Proton donor. A substrate-binding site is contributed by 300 to 306; that stretch reads ATTGRRR. GTP-binding positions include arginine 306, 332-334, and 415-417; these read KLD and STG.

It belongs to the adenylosuccinate synthetase family. In terms of assembly, homodimer. The cofactor is Mg(2+).

The protein resides in the cytoplasm. It catalyses the reaction IMP + L-aspartate + GTP = N(6)-(1,2-dicarboxyethyl)-AMP + GDP + phosphate + 2 H(+). The protein operates within purine metabolism; AMP biosynthesis via de novo pathway; AMP from IMP: step 1/2. Its function is as follows. Plays an important role in the de novo pathway of purine nucleotide biosynthesis. Catalyzes the first committed step in the biosynthesis of AMP from IMP. This Shigella sonnei (strain Ss046) protein is Adenylosuccinate synthetase.